The chain runs to 511 residues: ESX-1 secretion system protein EccD1 (511 aa).

Ser2 carries the N-acetylserine modification. At 2–143 (SAPAVAAGPT…PEFDRTALNR (142 aa)) the chain is on the cytoplasmic side. Residues 144–164 (FVGAAIPLLTAPVIGMAMRAW) form a helical membrane-spanning segment. The Periplasmic portion of the chain corresponds to 165–170 (WETGRS). Residues 171–191 (LWWPLAIGILGIAVLVGSFVA) traverse the membrane as a helical segment. Residues 192-202 (NRFYQSGHLAE) lie on the Cytoplasmic side of the membrane. A helical transmembrane segment spans residues 203 to 223 (CLLVTTYLLIATAAALAVPLP). The Periplasmic segment spans residues 224–227 (RGVN). The helical transmembrane segment at 228–248 (SLGAPQVAGAATAVLFLTLMT) threads the bilayer. Residues 249–257 (RGGPRKRHE) are Cytoplasmic-facing. The helical transmembrane segment at 258-278 (LASFAVITAIAVIAAAAAFGY) threads the bilayer. At 279-285 (GYQDWVP) the chain is on the periplasmic side. Residues 286-306 (AGGIAFGLFIVTNAAKLTVAV) traverse the membrane as a helical segment. Residues 307–367 (ARIALPPIPV…TERSKLAKQL (61 aa)) are Cytoplasmic-facing. A run of 2 helical transmembrane segments spans residues 368 to 388 (LIGY…AVVV) and 389 to 409 (RGHF…VCGF). The Cytoplasmic portion of the chain corresponds to 410-420 (RSRLYAERWCA). Residues 421–441 (WALLAATVAIPTGLTAKLIIW) traverse the membrane as a helical segment. Over 442 to 444 (YPH) the chain is Periplasmic. The chain crosses the membrane as a helical span at residues 445–465 (YAWLLLSVYLTVALVALVVVG). At 466–482 (SMAHVRRVSPVVKRTLE) the chain is on the cytoplasmic side. A helical membrane pass occupies residues 483–503 (LIDGAMIAAIIPMLLWITGVY). Topologically, residues 504-511 (DTVRNIRF) are periplasmic.

It belongs to the EccD/Snm4 family. In terms of assembly, possibly a homodimer. Part of the ESX-1 / type VII secretion system (T7SS), which is composed of cytosolic and membrane components. The ESX-1 membrane complex is composed of EccB1, EccCa1, EccCb1, EccD1 and EccE1.

The protein localises to the cell inner membrane. Part of the ESX-1 specialized secretion system, which delivers several virulence factors to host cells during infection, including the key virulence factors EsxA (ESAT-6) and EsxB (CFP-10). This Mycobacterium tuberculosis (strain ATCC 25618 / H37Rv) protein is ESX-1 secretion system protein EccD1.